Reading from the N-terminus, the 76-residue chain is Exodeoxyribonuclease 7 small subunit (76 aa).

It belongs to the XseB family. Heterooligomer composed of large and small subunits.

It is found in the cytoplasm. It carries out the reaction Exonucleolytic cleavage in either 5'- to 3'- or 3'- to 5'-direction to yield nucleoside 5'-phosphates.. Bidirectionally degrades single-stranded DNA into large acid-insoluble oligonucleotides, which are then degraded further into small acid-soluble oligonucleotides. This Staphylococcus epidermidis (strain ATCC 35984 / DSM 28319 / BCRC 17069 / CCUG 31568 / BM 3577 / RP62A) protein is Exodeoxyribonuclease 7 small subunit.